A 260-amino-acid chain; its full sequence is Aspartate/glutamate leucyltransferase (260 aa).

The span at 241 to 251 (DRLPEEGDRGP) shows a compositional bias: basic and acidic residues. Residues 241–260 (DRLPEEGDRGPARFPASLTE) are disordered.

It belongs to the R-transferase family. Bpt subfamily.

Its subcellular location is the cytoplasm. The enzyme catalyses N-terminal L-glutamyl-[protein] + L-leucyl-tRNA(Leu) = N-terminal L-leucyl-L-glutamyl-[protein] + tRNA(Leu) + H(+). It catalyses the reaction N-terminal L-aspartyl-[protein] + L-leucyl-tRNA(Leu) = N-terminal L-leucyl-L-aspartyl-[protein] + tRNA(Leu) + H(+). Its function is as follows. Functions in the N-end rule pathway of protein degradation where it conjugates Leu from its aminoacyl-tRNA to the N-termini of proteins containing an N-terminal aspartate or glutamate. This Gluconacetobacter diazotrophicus (strain ATCC 49037 / DSM 5601 / CCUG 37298 / CIP 103539 / LMG 7603 / PAl5) protein is Aspartate/glutamate leucyltransferase.